Reading from the N-terminus, the 603-residue chain is Linalool synthase Tps-5031L19, chloroplastic (603 aa).

Residues 1–36 constitute a chloroplast transit peptide; it reads MSSMRTYVAIMKKPSVEHVDNVDKKASKPSWRVSLS. (2E)-geranyl diphosphate-binding residues include Arg-322, Asp-359, Asp-363, Arg-500, and Asp-503. Positions 359 and 363 each coordinate Mg(2+). The DDXXD motif signature appears at 359–363; the sequence is DDVYD. Asp-503, Thr-507, and Glu-511 together coordinate Mg(2+).

It belongs to the terpene synthase family. Tpsb subfamily. Monomer. It depends on Mg(2+) as a cofactor. Mn(2+) serves as cofactor.

The protein localises to the plastid. Its subcellular location is the chloroplast. It catalyses the reaction (2E)-geranyl diphosphate + H2O = linalool + diphosphate. The protein operates within secondary metabolite biosynthesis; terpenoid biosynthesis. In terms of biological role, monoterpene synthase (mono-TPS) involved in the biosynthesis of monoterpenes natural products. Catalyzes the conversion of (2E)-geranyl diphosphate (GPP) into linalool. The polypeptide is Linalool synthase Tps-5031L19, chloroplastic (Perilla frutescens var. hirtella (Perilla citriodora)).